The chain runs to 242 residues: NAD(P)H-quinone oxidoreductase subunit K (242 aa).

C60, C61, C125, and C156 together coordinate [4Fe-4S] cluster.

This sequence belongs to the complex I 20 kDa subunit family. As to quaternary structure, NDH-1 can be composed of about 15 different subunits; different subcomplexes with different compositions have been identified which probably have different functions. [4Fe-4S] cluster is required as a cofactor.

Its subcellular location is the cellular thylakoid membrane. The enzyme catalyses a plastoquinone + NADH + (n+1) H(+)(in) = a plastoquinol + NAD(+) + n H(+)(out). It catalyses the reaction a plastoquinone + NADPH + (n+1) H(+)(in) = a plastoquinol + NADP(+) + n H(+)(out). Functionally, NDH-1 shuttles electrons from an unknown electron donor, via FMN and iron-sulfur (Fe-S) centers, to quinones in the respiratory and/or the photosynthetic chain. The immediate electron acceptor for the enzyme in this species is believed to be plastoquinone. Couples the redox reaction to proton translocation, and thus conserves the redox energy in a proton gradient. Cyanobacterial NDH-1 also plays a role in inorganic carbon-concentration. This Prochlorococcus marinus (strain SARG / CCMP1375 / SS120) protein is NAD(P)H-quinone oxidoreductase subunit K.